We begin with the raw amino-acid sequence, 61 residues long: Small ribosomal subunit protein uS14C (61 aa).

The Zn(2+) site is built by cysteine 24, cysteine 27, cysteine 40, and cysteine 43.

Belongs to the universal ribosomal protein uS14 family. Zinc-binding uS14 subfamily. As to quaternary structure, part of the 30S ribosomal subunit. Contacts proteins S3 and S10. Zn(2+) is required as a cofactor.

In terms of biological role, binds 16S rRNA, required for the assembly of 30S particles and may also be responsible for determining the conformation of the 16S rRNA at the A site. The polypeptide is Small ribosomal subunit protein uS14C (Enterococcus faecalis (strain ATCC 700802 / V583)).